We begin with the raw amino-acid sequence, 310 residues long: Ribosomal RNA small subunit methyltransferase H (310 aa).

S-adenosyl-L-methionine is bound by residues 32-34, aspartate 52, phenylalanine 79, aspartate 100, and glutamine 107; that span reads GGH.

It belongs to the methyltransferase superfamily. RsmH family.

The protein localises to the cytoplasm. It carries out the reaction cytidine(1402) in 16S rRNA + S-adenosyl-L-methionine = N(4)-methylcytidine(1402) in 16S rRNA + S-adenosyl-L-homocysteine + H(+). Functionally, specifically methylates the N4 position of cytidine in position 1402 (C1402) of 16S rRNA. The chain is Ribosomal RNA small subunit methyltransferase H from Geobacillus kaustophilus (strain HTA426).